Consider the following 484-residue polypeptide: Crt homolog 2 (484 aa).

Residues 1–57 lie on the Cytoplasmic side of the membrane; that stretch reads MSEEKLPLLSPLNENDIENDYKDENLKSDLDKLSNVKKQSIIQRFKDYLKNSISKQT. A helical transmembrane segment spans residues 58-78; sequence ATVLVYVVLYILSGVINSLLL. Over 79–94 the chain is Vacuolar; sequence KKVMNVFTNYGFFLNQ. A helical membrane pass occupies residues 95–115; the sequence is LTNYGYVPIFGAIVLYKILFT. Residues 116–128 are Cytoplasmic-facing; it reads NDIPKDTRSFPQW. Residues 129–149 traverse the membrane as a helical segment; sequence KFVIMGALDAVTGYFVVIGGI. Residues 150–154 are Vacuolar-facing; sequence KTTGP. Residues 155 to 175 form a helical membrane-spanning segment; it reads LQQLLNQSVIPFTMLLSFIFL. The Cytoplasmic segment spans residues 176–178; it reads KER. The helical transmembrane segment at 179–199 threads the bilayer; it reads YSLIQLGGALIIIGGVVVSLI. The Vacuolar portion of the chain corresponds to 200-210; it reads PSLTGGNTSGN. N-linked (GlcNAc...) asparagine glycosylation occurs at asparagine 206. Residues 211–231 traverse the membrane as a helical segment; sequence MLFYNFFYLISMIPYAFSNVY. Over 232–244 the chain is Cytoplasmic; the sequence is KAIGFSTVEDMDV. A helical membrane pass occupies residues 245 to 265; the sequence is WYLQYFDALYQSLVGTVLFPI. The Vacuolar segment spans residues 266 to 328; that stretch reads NNWLPPPSDM…LGCDNCHGAW (63 aa). An N-linked (GlcNAc...) asparagine glycan is attached at asparagine 302. A helical transmembrane segment spans residues 329-349; it reads VVVLIYMAVNVLYNVFILLVL. Residues 350–355 lie on the Cytoplasmic side of the membrane; it reads KHAGAT. A helical transmembrane segment spans residues 356–378; the sequence is VFSIANTLRLPLTNIAFSFKFIM. Topologically, residues 379 to 382 are vacuolar; the sequence is GSDS. A helical transmembrane segment spans residues 383 to 403; sequence NPFSGLSVAGLCIILLGLGGY. The Cytoplasmic portion of the chain corresponds to 404-484; that stretch reads RVGSMIKQKK…RNQNSIYGDQ (81 aa).

It belongs to the CRT-like transporter family.

It is found in the vacuole membrane. Nutrient transporter. Involved in maintaining the osmotic homeostasis of the digestive vacuole. This chain is Crt homolog 2 (crtp2), found in Dictyostelium discoideum (Social amoeba).